Consider the following 155-residue polypeptide: Small ribosomal subunit protein bS16 (155 aa).

Residues 100-155 form a disordered region; the sequence is EAGIPDPAPSTEEPAAVCEASAEMAGQPGEVEPAGAAAEPNSQEPEPEEEKPQVEA. Over residues 124-143 the composition is skewed to low complexity; sequence AGQPGEVEPAGAAAEPNSQE.

Belongs to the bacterial ribosomal protein bS16 family.

The sequence is that of Small ribosomal subunit protein bS16 from Synechococcus sp. (strain JA-3-3Ab) (Cyanobacteria bacterium Yellowstone A-Prime).